Reading from the N-terminus, the 178-residue chain is Large ribosomal subunit protein uL6 (178 aa).

The protein belongs to the universal ribosomal protein uL6 family. As to quaternary structure, part of the 50S ribosomal subunit.

In terms of biological role, this protein binds to the 23S rRNA, and is important in its secondary structure. It is located near the subunit interface in the base of the L7/L12 stalk, and near the tRNA binding site of the peptidyltransferase center. This is Large ribosomal subunit protein uL6 from Staphylococcus saprophyticus subsp. saprophyticus (strain ATCC 15305 / DSM 20229 / NCIMB 8711 / NCTC 7292 / S-41).